The following is a 617-amino-acid chain: Phenylalanine--tRNA ligase beta subunit (617 aa).

In terms of domain architecture, B5 spans Ile306–Lys383. Residues Asp361, Asp367, Glu370, and Asp371 each contribute to the Mg(2+) site.

It belongs to the phenylalanyl-tRNA synthetase beta subunit family. Type 2 subfamily. As to quaternary structure, tetramer of two alpha and two beta subunits. Requires Mg(2+) as cofactor.

The protein resides in the cytoplasm. The enzyme catalyses tRNA(Phe) + L-phenylalanine + ATP = L-phenylalanyl-tRNA(Phe) + AMP + diphosphate + H(+). This chain is Phenylalanine--tRNA ligase beta subunit (phesB), found in Dictyostelium discoideum (Social amoeba).